Consider the following 245-residue polypeptide: Thiopurine S-methyltransferase (245 aa).

29–40 is a binding site for S-adenosyl-L-methionine; it reads WQDKWVSHKIGF. A substrate-binding site is contributed by Phe40. Residue Lys58 is modified to N6-acetyllysine. Residues Leu69, Glu90, 134 to 135, and Arg152 each bind S-adenosyl-L-methionine; that span reads SI.

This sequence belongs to the class I-like SAM-binding methyltransferase superfamily. TPMT family. Monomer.

The protein resides in the cytoplasm. It carries out the reaction S-adenosyl-L-methionine + a thiopurine = S-adenosyl-L-homocysteine + a thiopurine S-methylether.. The sequence is that of Thiopurine S-methyltransferase (TPMT) from Oryctolagus cuniculus (Rabbit).